The following is a 179-amino-acid chain: Adenine phosphoribosyltransferase (179 aa).

Belongs to the purine/pyrimidine phosphoribosyltransferase family. As to quaternary structure, homodimer.

It is found in the cytoplasm. It catalyses the reaction AMP + diphosphate = 5-phospho-alpha-D-ribose 1-diphosphate + adenine. Its pathway is purine metabolism; AMP biosynthesis via salvage pathway; AMP from adenine: step 1/1. Its function is as follows. Catalyzes a salvage reaction resulting in the formation of AMP, that is energically less costly than de novo synthesis. The chain is Adenine phosphoribosyltransferase from Bradyrhizobium diazoefficiens (strain JCM 10833 / BCRC 13528 / IAM 13628 / NBRC 14792 / USDA 110).